A 177-amino-acid polypeptide reads, in one-letter code: Basic form of pathogenesis-related protein 1 (177 aa).

An N-terminal signal peptide occupies residues 1–23; that stretch reads MGFLTTIVACFITFAILIHSSKA. A Pyrrolidone carboxylic acid modification is found at Gln24. The SCP domain occupies 31 to 147; it reads LNPHNAARRQ…NGWFFITCNY (117 aa).

The protein belongs to the CRISP family. In terms of processing, two disulfide bonds are present.

Its function is as follows. Probably involved in the defense reaction of plants against pathogens. The sequence is that of Basic form of pathogenesis-related protein 1 from Nicotiana tabacum (Common tobacco).